The chain runs to 490 residues: MERVGCTLTTTYAHPRPTPTNFLPAISTMASSYRDRFPHSNLTHSLSLPWRPSTYYKVASNSPSVAPYCTRSQRVSENTMLPFVSNRTTFFTRYTPDDWYRSNLTNYQESNTSRHNSEKLRVDTSRLIQDKYQQTRKTQADTTQNLGERVNDIGFWKSEIIHELDEMIGETNALTDVKKRLERALMETEAPLQVARECLFHREKRMGIDLVHDEVEAQLLTEVDTILCCQERMKLHLDKAIAQLAANRASQHELEKDLSDKQTAYRIDDKCHHLRNTSDGVGYFRGVERVDATVSVPESWAKFTDDNILRSQSERAASAKLRDDIENLLVVTANEMWNQFNKVNLSFTNRIAETADAKNKIQTHLAKTLQEIFQTEMTIESIKKAIKDKTAFLKVAQTRLDERTRRPNIELCRDMAQLRLVNEVHEVDDTIQTLQQRLRDAEDTLQSLVHIKATLEYDLAVKANSLYIDQEKCMSMRKSYPNTLRLVGFC.

Residues Thr-7, Thr-9, and Thr-10 are each glycosylated (O-linked (GalNAc...) threonine). 6 N-linked (GlcNAc...) asparagine glycosylation sites follow: Asn-41, Asn-86, Asn-103, Asn-111, Asn-276, and Asn-344. Residues 424 to 451 are a coiled coil; that stretch reads VHEVDDTIQTLQQRLRDAEDTLQSLVHI.

This sequence belongs to the tektin family. In terms of assembly, microtubule inner protein component of sperm flagellar doublet microtubules. Interacts with TEKT1, TEKT2, TEKT4 and TEKT5. Interacts with CCDC38. In terms of processing, N- and O-glycosylated. Post-translationally, may be proteolytically processed during the epididymal transit of spermatozoa. Ubiquitinated, leading to its degradation. Deubiquitinated by USP16, promoting its stability. In terms of tissue distribution, expressed in spermatozoa. Expressed in airway epithelial cells.

It localises to the cytoplasm. Its subcellular location is the cytoskeleton. The protein localises to the cilium axoneme. It is found in the flagellum axoneme. The protein resides in the cytoplasmic vesicle. It localises to the secretory vesicle. Its subcellular location is the acrosome outer membrane. Functionally, microtubule inner protein (MIP) part of the dynein-decorated doublet microtubules (DMTs) in cilia and flagellar axoneme. Forms filamentous polymers in the walls of ciliary and flagellar microtubules. Required for normal sperm mobility. This is Tektin-3 (TEKT3) from Homo sapiens (Human).